Here is a 365-residue protein sequence, read N- to C-terminus: Ribosomal RNA large subunit methyltransferase F (365 aa).

Residues 1–50 (MSKPAVKSVPSATAKTATRAANPRQKAKAPKQAKPEGKGRAKPSKDKPRA) form a disordered region. Positions 33-50 (AKPEGKGRAKPSKDKPRA) are enriched in basic and acidic residues.

The protein belongs to the methyltransferase superfamily. METTL16/RlmF family.

The protein resides in the cytoplasm. The catalysed reaction is adenosine(1618) in 23S rRNA + S-adenosyl-L-methionine = N(6)-methyladenosine(1618) in 23S rRNA + S-adenosyl-L-homocysteine + H(+). In terms of biological role, specifically methylates the adenine in position 1618 of 23S rRNA. The chain is Ribosomal RNA large subunit methyltransferase F from Shewanella baltica (strain OS195).